The chain runs to 375 residues: Probable G-protein coupled receptor 27 (375 aa).

Residues 1-23 are Extracellular-facing; that stretch reads MANASEPGGSGGGEAAALGLKLA. Asn3 carries N-linked (GlcNAc...) asparagine glycosylation. Residues 24-44 traverse the membrane as a helical segment; that stretch reads TLSLLLCVSLAGNVLFALLIV. Topologically, residues 45-55 are cytoplasmic; it reads RERSLHRAPYY. A helical transmembrane segment spans residues 56-76; that stretch reads LLLDLCLADGLRALACLPAVM. Residues 77–97 lie on the Extracellular side of the membrane; it reads LAARRAAAAAGAPPGALGCKL. Cysteines 95 and 171 form a disulfide. Residues 98–118 form a helical membrane-spanning segment; sequence LAFLAALFCFHAAFLLLGVGV. At 119 to 139 the chain is on the cytoplasmic side; sequence TRYLAIAHHRFYAERLAGWPC. Residues 140 to 160 form a helical membrane-spanning segment; that stretch reads AAMLVCAAWALALAAAFPPVL. At 161 to 181 the chain is on the extracellular side; the sequence is DGGGDDEDAPCALEQRPDGAP. The helical transmembrane segment at 182 to 202 threads the bilayer; it reads GALGFLLLLAVVVGATHLVYL. Residues 203-285 are Cytoplasmic-facing; it reads RLLFFIHDRR…FKTEKRLCKM (83 aa). The chain crosses the membrane as a helical span at residues 286–306; the sequence is FYAVTLLFLLLWGPYVVASYL. The Extracellular portion of the chain corresponds to 307–320; the sequence is RVLVRPGAVPQAYL. The chain crosses the membrane as a helical span at residues 321-341; that stretch reads TASVWLTFAQAGINPVVCFLF. At 342–375 the chain is on the cytoplasmic side; it reads NRELRDCFRAQFPCCQSPRTTQATHPCDLKGIGL.

The protein belongs to the G-protein coupled receptor 1 family. As to expression, highly expressed as a 3.0 kb transcript in brain, ovary, testis, heart, prostate and peripheral Leukocytes. Lower levels in pancreas and small intestine. A 2.3 kb transcript was also found in peripheral Leukocytes. In brain regions, detected as a 3.0 kb transcript in all regions tested. Highest levels in the caudate nucleus, putamen, hippocampus and subthalamic nucleus. Lowest level in the cerebellum.

It localises to the cell membrane. In terms of biological role, orphan receptor. Possible candidate for amine-like G-protein coupled receptor. This is Probable G-protein coupled receptor 27 (GPR27) from Homo sapiens (Human).